Here is a 971-residue protein sequence, read N- to C-terminus: uncharacterized protein (971 aa).

The N-terminal stretch at 1-24 is a signal peptide; that stretch reads MQSNLLKVLGVLAIVATLVCFIFA. Residues 127–146 are disordered; the sequence is RTRPGKSNLDDSGQMIPIPR. 6 consecutive transmembrane segments (helical) span residues 611 to 631, 721 to 741, 753 to 773, 795 to 815, 832 to 852, and 865 to 885; these read IKAILILYVMTYGAMFLLGFA, LGLSGIIYFIITFIAICIVII, AFMATCILIGIAPLFISFLLF, VVMMAGIIVLTQLFTIYLDFV, FIGTILPIALLNVPIFCINWF, and GVNMQNIVALVIIAYGMYGYV. Residues 933–971 are disordered; the sequence is TGRAKSRLEQRNRTLEHAEQNSKKYKKRIGENTNEETLK. A compositionally biased stretch (basic and acidic residues) spans 938-954; sequence SRLEQRNRTLEHAEQNS.

The protein belongs to the TrbL/VirB6 family.

Its subcellular location is the cell membrane. This is an uncharacterized protein from Rickettsia prowazekii (strain Madrid E).